A 236-amino-acid chain; its full sequence is Orotidine 5'-phosphate decarboxylase (236 aa).

Substrate contacts are provided by residues Asp-14, Lys-36, 63–72 (DLKFHDIPNT), Thr-122, Arg-183, Gln-192, Gly-212, and Arg-213. Residue Lys-65 is the Proton donor of the active site.

Belongs to the OMP decarboxylase family. Type 1 subfamily. Homodimer.

It carries out the reaction orotidine 5'-phosphate + H(+) = UMP + CO2. Its pathway is pyrimidine metabolism; UMP biosynthesis via de novo pathway; UMP from orotate: step 2/2. Its function is as follows. Catalyzes the decarboxylation of orotidine 5'-monophosphate (OMP) to uridine 5'-monophosphate (UMP). The protein is Orotidine 5'-phosphate decarboxylase of Chromohalobacter salexigens (strain ATCC BAA-138 / DSM 3043 / CIP 106854 / NCIMB 13768 / 1H11).